The chain runs to 442 residues: UDP-N-acetylmuramate--L-alanine ligase (442 aa).

Position 109 to 115 (109 to 115) interacts with ATP; the sequence is GAHGKTS.

It belongs to the MurCDEF family.

The protein localises to the cytoplasm. The catalysed reaction is UDP-N-acetyl-alpha-D-muramate + L-alanine + ATP = UDP-N-acetyl-alpha-D-muramoyl-L-alanine + ADP + phosphate + H(+). Its pathway is cell wall biogenesis; peptidoglycan biosynthesis. In terms of biological role, cell wall formation. This chain is UDP-N-acetylmuramate--L-alanine ligase, found in Streptococcus pyogenes serotype M2 (strain MGAS10270).